The sequence spans 232 residues: tRNA (guanine-N(1)-)-methyltransferase (232 aa).

S-adenosyl-L-methionine contacts are provided by residues glycine 111 and 131–136 (IGDYIL).

The protein belongs to the RNA methyltransferase TrmD family. In terms of assembly, homodimer.

It localises to the cytoplasm. It catalyses the reaction guanosine(37) in tRNA + S-adenosyl-L-methionine = N(1)-methylguanosine(37) in tRNA + S-adenosyl-L-homocysteine + H(+). Functionally, specifically methylates guanosine-37 in various tRNAs. In Bartonella bacilliformis (strain ATCC 35685 / KC583 / Herrer 020/F12,63), this protein is tRNA (guanine-N(1)-)-methyltransferase.